Here is a 145-residue protein sequence, read N- to C-terminus: D-aminoacyl-tRNA deacylase (145 aa).

A Gly-cisPro motif, important for rejection of L-amino acids motif is present at residues 137–138 (GP).

Belongs to the DTD family. In terms of assembly, homodimer.

The protein resides in the cytoplasm. The catalysed reaction is glycyl-tRNA(Ala) + H2O = tRNA(Ala) + glycine + H(+). It carries out the reaction a D-aminoacyl-tRNA + H2O = a tRNA + a D-alpha-amino acid + H(+). An aminoacyl-tRNA editing enzyme that deacylates mischarged D-aminoacyl-tRNAs. Also deacylates mischarged glycyl-tRNA(Ala), protecting cells against glycine mischarging by AlaRS. Acts via tRNA-based rather than protein-based catalysis; rejects L-amino acids rather than detecting D-amino acids in the active site. By recycling D-aminoacyl-tRNA to D-amino acids and free tRNA molecules, this enzyme counteracts the toxicity associated with the formation of D-aminoacyl-tRNA entities in vivo and helps enforce protein L-homochirality. This chain is D-aminoacyl-tRNA deacylase, found in Methylacidiphilum infernorum (isolate V4) (Methylokorus infernorum (strain V4)).